Consider the following 955-residue polypeptide: 2-oxoglutarate dehydrogenase E1 component (955 aa).

This sequence belongs to the alpha-ketoglutarate dehydrogenase family. As to quaternary structure, homodimer. Part of the 2-oxoglutarate dehydrogenase (OGDH) complex composed of E1 (2-oxoglutarate dehydrogenase), E2 (dihydrolipoamide succinyltransferase) and E3 (dihydrolipoamide dehydrogenase); the complex contains multiple copies of the three enzymatic components (E1, E2 and E3). Thiamine diphosphate serves as cofactor.

It catalyses the reaction N(6)-[(R)-lipoyl]-L-lysyl-[protein] + 2-oxoglutarate + H(+) = N(6)-[(R)-S(8)-succinyldihydrolipoyl]-L-lysyl-[protein] + CO2. Functionally, E1 component of the 2-oxoglutarate dehydrogenase (OGDH) complex which catalyzes the decarboxylation of 2-oxoglutarate, the first step in the conversion of 2-oxoglutarate to succinyl-CoA and CO(2). The chain is 2-oxoglutarate dehydrogenase E1 component from Bacillus cereus (strain B4264).